We begin with the raw amino-acid sequence, 1372 residues long: Collagen alpha-2(I) chain (1372 aa).

Positions 1 to 22 are cleaved as a signal peptide; sequence MLSFVDTRTLLLLAVTSCLATC. Gln23 bears the Pyrrolidone carboxylic acid mark. A propeptide spans 23–85 (N-terminal propeptide); the sequence is QYLQSGSVRK…PPGLTGNFAA (63 aa). The tract at residues 28-1135 is disordered; it reads GSVRKGPTGD…DQPRSQPSLR (1108 aa). A compositionally biased stretch (pro residues) spans 59 to 77; the sequence is MGPPGPPGSPGPPGSPAPP. Lys90 carries the post-translational modification Allysine. Positions 95-146 are enriched in low complexity; it reads GPGPMGLMGPRGPPGAVGAPGPQGFQGPAGEPGEPGQTGPAGPRGPAGSPGK. Residues 147-161 show a composition bias toward basic and acidic residues; the sequence is AGEDGHPGKPGRPGE. Lys183 bears the 5-hydroxylysine; alternate mark. The O-linked (Gal...) hydroxylysine; alternate glycan is linked to Lys183. Low complexity-rich tracts occupy residues 231-260, 285-299, 306-327, 336-351, 390-416, 476-495, and 519-537; these read VGAPGPAGARGSDGSVGPVGPAGPIGSAGP, AGPRGEVGLPGLSGP, PGTNGLTGAKGATGLPGVAGAP, PGPAGAAGATGARGLV, PGEAGSAGPAGPPGLRGSPGSRGLPGA, LPGIDGRPGPIGPAGPRGEA, and PGLAGARGAPGPDGNNGAQ. Over residues 544 to 553 the composition is skewed to gly residues; the sequence is GVQGGKGEQG. A compositionally biased stretch (low complexity) spans 600 to 639; the sequence is PGESGAAGPSGPIGSRGPSGAPGPDGNKGEAGAVGAPGSA. Over residues 640 to 649 the composition is skewed to gly residues; it reads GASGPGGLPG. 2 stretches are compositionally biased toward low complexity: residues 681–716 and 725–743; these read RGIPGAVGAPGPAGASGDRGEAGAAGPSGPAGPRGS and PAGPNGFAGPAGAAGQPGA. Over residues 744 to 753 the composition is skewed to basic and acidic residues; the sequence is KGEKGTKGPK. The segment covering 755–771 has biased composition (low complexity); that stretch reads ENGIVGPTGSVGAAGPS. Residues 781 to 790 are compositionally biased toward gly residues; sequence GSRGDGGPPG. 5 stretches are compositionally biased toward low complexity: residues 792–801, 855–882, 905–927, 957–978, and 987–1007; these read TGFPGAAGRT, SGEPGTAGAPGTAGPQGLLGAPGILGLP, ISGPPGARGPPGAVGSPGVNGAP, PGSIGPTGAAGAPGPHGSVGPA, and PGPAGSVGPVGAVGPRGPSGP. Basic and acidic residues predominate over residues 1011 to 1022; the sequence is RGDKGEPGDKGH. Residues 1095-1107 show a composition bias toward pro residues; the sequence is AGPPGPPGPPGPP. Positions 1126–1372 are cleaved as a propeptide — C-terminal propeptide; sequence DQPRSQPSLR…RVEVGPVCFK (247 aa). The region spanning 1139–1372 is the Fibrillar collagen NC1 domain; it reads YEVDATLKSL…RVEVGPVCFK (234 aa). Intrachain disulfides connect Cys1169–Cys1201, Cys1209–Cys1370, and Cys1278–Cys1323. Asp1187, Asn1189, Gln1190, Cys1192, and Asp1195 together coordinate Ca(2+). Asn1273 is a glycosylation site (N-linked (GlcNAc...) asparagine).

The protein belongs to the fibrillar collagen family. In terms of assembly, trimers of one alpha 2(I) and two alpha 1(I) chains. Interacts (via C-terminus) with TMEM131 (via PapD-L domain); the interaction is direct and is involved in assembly and TRAPPIII ER-to-Golgi transport complex-dependent secretion of collagen. In terms of processing, prolines at the third position of the tripeptide repeating unit (G-X-Y) are hydroxylated in some or all of the chains. In terms of tissue distribution, expressed in kidney glomeruli.

Its subcellular location is the secreted. It localises to the extracellular space. The protein resides in the extracellular matrix. Type I collagen is a member of group I collagen (fibrillar forming collagen). This chain is Collagen alpha-2(I) chain (Col1a2), found in Mus musculus (Mouse).